The primary structure comprises 880 residues: A-adding tRNA nucleotidyltransferase (880 aa).

CBS domains are found at residues 315–373 and 377–435; these read MSSP…NLPV and MHTE…RNAE. 487-490 lines the ATP pocket; it reads GFVR. Positions 500 and 502 each coordinate Mg(2+). ATP is bound by residues 574-575, Asn-579, 619-628, Arg-632, and Arg-661; these read RD and DPTRVFRAIR.

It belongs to the tRNA nucleotidyltransferase/poly(A) polymerase family. Mg(2+) is required as a cofactor.

It catalyses the reaction a tRNA with a 3' CC end + ATP = a tRNA with a 3' CCA end + diphosphate. In terms of biological role, tRNA nucleotidyltransferase involved in the synthesis of the tRNA CCA terminus. Adds the terminal adenosine residue to tRNA. The sequence is that of A-adding tRNA nucleotidyltransferase from Geobacter sulfurreducens (strain ATCC 51573 / DSM 12127 / PCA).